Reading from the N-terminus, the 510-residue chain is Mitochondrial metal transporter 1 (510 aa).

Residues 120–141 (ADKPSSLNLHSHTHSHGHTHSH) form a disordered region. The segment covering 130–141 (SHTHSHGHTHSH) has biased composition (basic residues). 6 helical membrane passes run 165–185 (WVGL…GIVF), 194–214 (AIHA…VGLA), 241–261 (LAMA…GPVI), 286–306 (VTDI…EWIF), 333–353 (LTSL…IQSL), and 356–376 (IGGL…MCIA).

The protein belongs to the cation diffusion facilitator (CDF) transporter (TC 2.A.4) family. SLC30A subfamily.

It localises to the mitochondrion membrane. Functionally, mitochondrial metal transporter involved in mitochondrial iron accumulation. The chain is Mitochondrial metal transporter 1 (MMT1) from Saccharomyces cerevisiae (strain ATCC 204508 / S288c) (Baker's yeast).